The primary structure comprises 586 residues: Septin-9 (586 aa).

Methionine 1 is subject to N-acetylmethionine. Residues 1 to 14 show a composition bias toward low complexity; that stretch reads MKKSYSGGTRTSSG. Disordered regions lie at residues 1–49, 62–108, and 134–268; these read MKKS…RVQT, KFQD…SRRT, and RAEV…PASR. Residues serine 22 and serine 30 each carry the phosphoserine modification. Phosphothreonine is present on residues threonine 38, threonine 42, and threonine 49. Lysine 62 is modified (N6-acetyllysine). 4 positions are modified to phosphoserine: serine 82, serine 85, serine 89, and serine 96. Residues 134–151 are compositionally biased toward basic and acidic residues; it reads RAEVLGHKTPEPAPRRTE. Threonine 142 is modified (phosphothreonine). Tyrosine 278 bears the Phosphotyrosine mark. The 273-residue stretch at 295–567 folds into the Septin-type G domain; sequence QGFEFNIMVV…EAYRVKRLNE (273 aa). Residues 305 to 312 are G1 motif; sequence GQSGLGKS. 305–312 is a binding site for GTP; it reads GQSGLGKS. Phosphoserine occurs at positions 327 and 332. Residues threonine 339, glycine 365, 445–453, glycine 501, and arginine 516 each bind GTP; that span reads KADTLTLEE. Positions 362 to 365 are G3 motif; it reads DTPG. The segment at 444 to 447 is G4 motif; that stretch reads AKAD.

Belongs to the TRAFAC class TrmE-Era-EngA-EngB-Septin-like GTPase superfamily. Septin GTPase family. As to quaternary structure, septins polymerize into heterooligomeric protein complexes that form filaments, and associate with cellular membranes, actin filaments, and microtubules. GTPase activity is required for filament formation. Interacts with SEPTIN2, SEPTIN6, SEPTIN7, SEPTIN11 and SEPTIN14. Interacts with RTKN and ARHGEF18. In a mesenchymal cell line, Rho/RTKN signals cause disruption of wild-type septin filaments, but not of those containing isoform 2 variants HNA Trp-106 and Phe-111. In a mesenchymal cell line, isoform 2 variants HNA Trp-106 and Phe-111, but not wild type, form filaments with SEPTIN4. As to expression, widely expressed. Isoforms are differentially expressed in testes, kidney, liver heart, spleen, brain, peripheral blood leukocytes, skeletal muscle and kidney. Specific isoforms appear to demonstrate tissue specificity. Isoform 5 is the most highly expressed in fetal tissue. Isoform 1 is detected in all tissues except the brain and thymus, while isoform 2, isoform 3, and isoform 4 are detected at low levels in approximately half of the fetal tissues.

Its subcellular location is the cytoplasm. It localises to the cytoskeleton. Its function is as follows. Filament-forming cytoskeletal GTPase. May play a role in cytokinesis (Potential). May play a role in the internalization of 2 intracellular microbial pathogens, Listeria monocytogenes and Shigella flexneri. In Homo sapiens (Human), this protein is Septin-9.